A 778-amino-acid chain; its full sequence is Melanoma-associated antigen D1 (778 aa).

Disordered stretches follow at residues 41–60 (PTNQ…PTAN), 78–123 (FKVQ…KGPN), and 182–333 (KAWN…PAWQ). Tyr92 carries the phosphotyrosine modification. Polar residues-rich tracts occupy residues 104-118 (PNTQ…QNAT), 185-211 (NDTT…SQAD), 225-240 (TAQT…NLES), 253-263 (NNLNVEENSSG), and 300-319 (LAWQ…TPPA). 19 tandem repeats follow at residues 296–301 (WQTPLA), 302–307 (WQNPSG), 308–313 (WQNQTA), 332–337 (WQNPVA), 338–343 (WQNPVI), 344–349 (WPNPVI), 350–355 (WQNPVI), 356–361 (WPNPIV), 362–367 (WPGPVV), 368–373 (WPNPLA), 374–379 (WQNPPG), 380–385 (WQTPPG), 386–391 (WQTPPG), 392–397 (WQGPPD), 398–403 (WQGPPD), 404–409 (WPLPPD), 410–415 (WPLPPD), 416–421 (WPLPTD), and 422–427 (WPLPPD). A 22 X 6 AA tandem repeats of W-[PQ]-X-P-X-X region spans residues 296–444 (WQTPLAWQNP…IPPDWQNLRP (149 aa)). Residues 376–412 (NPPGWQTPPGWQTPPGWQGPPDWQGPPDWPLPPDWPL) are disordered. Residues 377–397 (PPGWQTPPGWQTPPGWQGPPD) show a composition bias toward low complexity. The span at 398-412 (WQGPPDWPLPPDWPL) shows a compositional bias: pro residues. One copy of the 20; approximate repeat lies at 428–432 (WIPAD). 2 tandem repeats follow at residues 433-438 (WPIPPD) and 439-444 (WQNLRP). Low complexity predominate over residues 440–455 (QNLRPSPNLRPSPNSR). Residues 440-466 (QNLRPSPNLRPSPNSRASQNPGAAQPR) form a disordered region. The MAGE domain maps to 471–669 (LQERANKLVK…RDWTAQFMEA (199 aa)).

Interacts with DLX5, DLX7 and MSX2 and forms homomultimers. Interacts with UNC5A. Interacts with TRIM28 and PJA1. Interacts with NGFR/p75NTR and RORA. Expressed in bone marrow stromal cells from both multiple myeloma patients and healthy donors. Seems to be ubiquitously expressed.

The protein resides in the cytoplasm. The protein localises to the cell membrane. It localises to the nucleus. In terms of biological role, involved in the apoptotic response after nerve growth factor (NGF) binding in neuronal cells. Inhibits cell cycle progression, and facilitates NGFR-mediated apoptosis. May act as a regulator of the function of DLX family members. May enhance ubiquitin ligase activity of RING-type zinc finger-containing E3 ubiquitin-protein ligases. Proposed to act through recruitment and/or stabilization of the Ubl-conjugating enzyme (E2) at the E3:substrate complex. Plays a role in the circadian rhythm regulation. May act as RORA co-regulator, modulating the expression of core clock genes such as BMAL1 and NFIL3, induced, or NR1D1, repressed. The protein is Melanoma-associated antigen D1 (MAGED1) of Homo sapiens (Human).